Consider the following 934-residue polypeptide: Serine/threonine-protein kinase PknD (934 aa).

The 293-residue stretch at 4–296 (YELIRLIGKG…ELRQALQPYL (293 aa)) folds into the Protein kinase domain. ATP is bound by residues 10–18 (IGKGGMGEV) and Lys-33. Residue Asp-138 is the Proton acceptor of the active site.

It belongs to the protein kinase superfamily. Ser/Thr protein kinase family. In terms of assembly, interacts with Pkn1. In terms of processing, autophosphorylated on serine and threonine residues.

It catalyses the reaction L-seryl-[protein] + ATP = O-phospho-L-seryl-[protein] + ADP + H(+). The catalysed reaction is L-threonyl-[protein] + ATP = O-phospho-L-threonyl-[protein] + ADP + H(+). Together with the serine/threonine kinase Pkn1, may play a role in the specific interactions with host proteins during intracellular growth. Autophosphorylates and also phosphorylates Pkn1. The protein is Serine/threonine-protein kinase PknD of Chlamydia trachomatis serovar D (strain ATCC VR-885 / DSM 19411 / UW-3/Cx).